Consider the following 330-residue polypeptide: 4,5-dihydroxyphthalate decarboxylase (330 aa).

It to P.putida DHP decarboxylase.

It carries out the reaction 4,5-dihydroxyphthalate + H(+) = 3,4-dihydroxybenzoate + CO2. The protein operates within xenobiotic degradation; phthalate degradation; 3,4-dihydroxybenzoate from phthalate: step 3/3. This Comamonas testosteroni (Pseudomonas testosteroni) protein is 4,5-dihydroxyphthalate decarboxylase (phtD).